We begin with the raw amino-acid sequence, 188 residues long: Ribosome-recycling factor (188 aa).

The protein belongs to the RRF family.

The protein localises to the cytoplasm. Responsible for the release of ribosomes from messenger RNA at the termination of protein biosynthesis. May increase the efficiency of translation by recycling ribosomes from one round of translation to another. The chain is Ribosome-recycling factor from Cereibacter sphaeroides (strain ATCC 17023 / DSM 158 / JCM 6121 / CCUG 31486 / LMG 2827 / NBRC 12203 / NCIMB 8253 / ATH 2.4.1.) (Rhodobacter sphaeroides).